Reading from the N-terminus, the 99-residue chain is Large ribosomal subunit protein uL23cz/uL23cy (99 aa).

Positions 1–37 (MGGVENPVSTDKAIRLPERKQYSSNAEPNPSKTEVKR) are disordered. Over residues 12-21 (KAIRLPERKQ) the composition is skewed to basic and acidic residues. Residues 22–32 (YSSNAEPNPSK) show a composition bias toward polar residues.

Belongs to the universal ribosomal protein uL23 family. Part of the 50S ribosomal subunit.

The protein resides in the plastid. It is found in the chloroplast. Binds to 23S rRNA. This chain is Large ribosomal subunit protein uL23cz/uL23cy (rpl23-A), found in Selaginella uncinata (Blue spike-moss).